The following is a 72-amino-acid chain: Candidate secreted effector protein MPL124499 (72 aa).

The signal sequence occupies residues 1-21 (MKLSIFAAIFMAFVSLNQVFG).

This sequence belongs to the CPGH1 family.

It is found in the secreted. The protein resides in the host cell. The protein localises to the host cytoplasm. It localises to the host nucleus. Its function is as follows. Rust effector delivered into infected tissues to modulate host functions and contribute to pathogen virulence. Enhances leaf colonization by the bacteria Pseudomonas syringae and the oomycete Hyaloperonospora arabidopsidis pathogens in an Arabidopsis thaliana infection model. This chain is Candidate secreted effector protein MPL124499, found in Melampsora larici-populina (strain 98AG31 / pathotype 3-4-7) (Poplar leaf rust fungus).